The following is a 276-amino-acid chain: Halorhodopsin (276 aa).

The propeptide occupies 1–20 (MTAASTTATTVLQATQSDVL). Gln-21 bears the Pyrrolidone carboxylic acid mark. 7 helical membrane-spanning segments follow: residues 31–51 (SSIWVNIALAGVVILLFVAMG), 61–81 (LIWVATMLVPLVSISSYAGLA), 109–129 (YLTWTFSTPMILLALGLLADT), 134–154 (LFTAITMDIGMCVTGLAAALI), 162–182 (WVFYGISCAFFVAVLYVLLVQ), 195–215 (IFGTLKILTVVLWLGYPILWA), and 220–240 (GVALLSVGVTSWGYSGLDILA). An N6-(retinylidene)lysine modification is found at Lys-241.

The protein belongs to the archaeal/bacterial/fungal opsin family. Post-translationally, the covalent binding of retinal to the apoprotein, bacterioopsin, generates bacteriorhodopsin.

It localises to the membrane. Its function is as follows. Light-driven chloride pump. This Haloarcula marismortui (strain ATCC 43049 / DSM 3752 / JCM 8966 / VKM B-1809) (Halobacterium marismortui) protein is Halorhodopsin (hop).